A 568-amino-acid chain; its full sequence is Oxygen-dependent choline dehydrogenase (568 aa).

D6–E35 provides a ligand contact to FAD. Residue H470 is the Proton acceptor of the active site.

The protein belongs to the GMC oxidoreductase family. FAD serves as cofactor.

The enzyme catalyses choline + A = betaine aldehyde + AH2. It carries out the reaction betaine aldehyde + NAD(+) + H2O = glycine betaine + NADH + 2 H(+). It functions in the pathway amine and polyamine biosynthesis; betaine biosynthesis via choline pathway; betaine aldehyde from choline (cytochrome c reductase route): step 1/1. Functionally, involved in the biosynthesis of the osmoprotectant glycine betaine. Catalyzes the oxidation of choline to betaine aldehyde and betaine aldehyde to glycine betaine at the same rate. This is Oxygen-dependent choline dehydrogenase from Photobacterium profundum (strain SS9).